The sequence spans 322 residues: Lipoyl synthase (322 aa).

Cysteine 69, cysteine 74, cysteine 80, cysteine 95, cysteine 99, cysteine 102, and serine 309 together coordinate [4Fe-4S] cluster. The Radical SAM core domain maps to 81–298; that stretch reads FNHGTATFMI…KEIALELGFT (218 aa).

This sequence belongs to the radical SAM superfamily. Lipoyl synthase family. [4Fe-4S] cluster serves as cofactor.

Its subcellular location is the cytoplasm. It carries out the reaction [[Fe-S] cluster scaffold protein carrying a second [4Fe-4S](2+) cluster] + N(6)-octanoyl-L-lysyl-[protein] + 2 oxidized [2Fe-2S]-[ferredoxin] + 2 S-adenosyl-L-methionine + 4 H(+) = [[Fe-S] cluster scaffold protein] + N(6)-[(R)-dihydrolipoyl]-L-lysyl-[protein] + 4 Fe(3+) + 2 hydrogen sulfide + 2 5'-deoxyadenosine + 2 L-methionine + 2 reduced [2Fe-2S]-[ferredoxin]. Its pathway is protein modification; protein lipoylation via endogenous pathway; protein N(6)-(lipoyl)lysine from octanoyl-[acyl-carrier-protein]: step 2/2. In terms of biological role, catalyzes the radical-mediated insertion of two sulfur atoms into the C-6 and C-8 positions of the octanoyl moiety bound to the lipoyl domains of lipoate-dependent enzymes, thereby converting the octanoylated domains into lipoylated derivatives. This chain is Lipoyl synthase, found in Photobacterium profundum (strain SS9).